A 238-amino-acid chain; its full sequence is Probable transcriptional regulatory protein YeeN (238 aa).

This sequence belongs to the TACO1 family. YeeN subfamily.

Its subcellular location is the cytoplasm. In Salmonella typhi, this protein is Probable transcriptional regulatory protein YeeN.